The chain runs to 599 residues: Histone-arginine methyltransferase CARMER (599 aa).

In terms of domain architecture, SAM-dependent MTase PRMT-type spans A127 to D434. Residues Q140, R149, G173, E195, E224, and T252 each contribute to the S-adenosyl-L-methionine site. R487 is modified (asymmetric dimethylarginine; by autocatalysis).

Belongs to the class I-like SAM-binding methyltransferase superfamily. Protein arginine N-methyltransferase family. As to quaternary structure, homodimer. In terms of processing, the dimethylated protein is the major form.

It localises to the cytoplasm. The protein localises to the nucleus. It carries out the reaction L-arginyl-[protein] + 2 S-adenosyl-L-methionine = N(omega),N(omega)-dimethyl-L-arginyl-[protein] + 2 S-adenosyl-L-homocysteine + 2 H(+). Functionally, methylates (mono- and asymmetric dimethylation) the guanidino nitrogens of arginyl residues in proteins. May methylate histone H3 at 'Arg-17' and activate transcription via chromatin remodeling. The chain is Histone-arginine methyltransferase CARMER (Art4) from Culex quinquefasciatus (Southern house mosquito).